A 239-amino-acid chain; its full sequence is Trimethylguanosine synthase (239 aa).

It belongs to the methyltransferase superfamily. Trimethylguanosine synthase family. As to quaternary structure, monomer. Interacts with mug174; both proteins are required to maintain Cajal body integrity.

It localises to the nucleus. The protein localises to the cajal body. It catalyses the reaction a 5'-end (N(7)-methyl 5'-triphosphoguanosine)-ribonucleoside in snRNA + S-adenosyl-L-methionine = a 5'-end (N(2),N(7)-dimethyl 5'-triphosphoguanosine)-ribonucleoside in snRNA + S-adenosyl-L-homocysteine + H(+). It carries out the reaction a 5'-end (N(7)-methyl 5'-triphosphoguanosine)-ribonucleoside in snoRNA + S-adenosyl-L-methionine = a 5'-end (N(2),N(7)-dimethyl 5'-triphosphoguanosine)-ribonucleoside in snoRNA + S-adenosyl-L-homocysteine + H(+). The enzyme catalyses a 5'-end (N(2),N(7)-dimethyl 5'-triphosphoguanosine)-ribonucleoside in snRNA + S-adenosyl-L-methionine = a 5'-end (N(2),N(2),N(7)-trimethyl 5'-triphosphoguanosine)-ribonucleoside in snRNA + S-adenosyl-L-homocysteine + H(+). The catalysed reaction is a 5'-end (N(2),N(7)-dimethyl 5'-triphosphoguanosine)-ribonucleoside in snoRNA + S-adenosyl-L-methionine = a 5'-end (N(2),N(2),N(7)-trimethyl 5'-triphosphoguanosine)-ribonucleoside in snoRNA + S-adenosyl-L-homocysteine + H(+). Substrate inhibited by S-adenosyl-L-homocysteine. Functionally, catalyzes the two serial methylation steps for the conversion of the 7-monomethylguanosine (m(7)G) caps of snRNAs and snoRNAs to a 2,2,7-trimethylguanosine (m(2,2,7)G) cap structure. The enzyme is specific for guanine, and N7 methylation must precede N2 methylation. Required for pre-mRNA splicing, pre-rRNA processing and small ribosomal subunit synthesis. Involved in nucleolar structural organization. The sequence is that of Trimethylguanosine synthase (tgs1) from Schizosaccharomyces pombe (strain 972 / ATCC 24843) (Fission yeast).